A 231-amino-acid polypeptide reads, in one-letter code: Transmembrane protein 225 (231 aa).

The Cytoplasmic segment spans residues 1 to 13 (MMRIPNRSIQAAN). A helical transmembrane segment spans residues 14–34 (IFFSSGAILLLIAGLIMENWV). Residues 35–71 (ELIPKVRKDKVTHSPWLGCCPPFWPEESLEAIRRMMM) are Extracellular-facing. The helical transmembrane segment at 72-92 (MSLNISIYLNLIIGLQFTYMI) threads the bilayer. The Cytoplasmic portion of the chain corresponds to 93 to 99 (SQNKCVH). The chain crosses the membrane as a helical span at residues 100–120 (LLIGFLSFFTGCLLFYAIIVY). Residues 121–139 (HHKLNKGQYVYFVNYKTKW) are Extracellular-facing. A helical membrane pass occupies residues 140-160 (IVFTIYLTIALFLTCGIFSFI). Residues 161–231 (QCTNRCACMK…LQSRRVTWAL (71 aa)) are Cytoplasmic-facing. The RVxF motif lies at 225-229 (RRVTW).

Interacts (via RVxF motif) with PPP1CC. In terms of tissue distribution, expressed in testis, specifically in spermatocytes and round spermatids.

It is found in the cytoplasmic vesicle. It localises to the secretory vesicle. The protein localises to the acrosome membrane. Its function is as follows. Probably inhibits protein phosphatase 1 (PP1) in sperm via binding to catalytic subunit PPP1CC. This is Transmembrane protein 225 (Tmem225) from Rattus norvegicus (Rat).